The chain runs to 397 residues: 8-amino-7-oxononanoate synthase (397 aa).

Arg-23 serves as a coordination point for substrate. 110 to 111 (GY) contributes to the pyridoxal 5'-phosphate binding site. Position 135 (His-135) interacts with substrate. Pyridoxal 5'-phosphate is bound by residues Ser-181, His-209, and Thr-237. Lys-240 bears the N6-(pyridoxal phosphate)lysine mark. Thr-354 serves as a coordination point for substrate.

The protein belongs to the class-II pyridoxal-phosphate-dependent aminotransferase family. BioF subfamily. In terms of assembly, homodimer. Requires pyridoxal 5'-phosphate as cofactor.

It catalyses the reaction 6-carboxyhexanoyl-[ACP] + L-alanine + H(+) = (8S)-8-amino-7-oxononanoate + holo-[ACP] + CO2. It participates in cofactor biosynthesis; biotin biosynthesis. Catalyzes the decarboxylative condensation of pimeloyl-[acyl-carrier protein] and L-alanine to produce 8-amino-7-oxononanoate (AON), [acyl-carrier protein], and carbon dioxide. The protein is 8-amino-7-oxononanoate synthase of Anaeromyxobacter sp. (strain Fw109-5).